The sequence spans 385 residues: Acetate kinase (385 aa).

Asn9 is a Mg(2+) binding site. Residue Lys16 participates in ATP binding. Arg87 contributes to the substrate binding site. Asp144 acts as the Proton donor/acceptor in catalysis. ATP contacts are provided by residues His202–Gly206 and Asp277–Arg279. Glu373 lines the Mg(2+) pocket.

It belongs to the acetokinase family. As to quaternary structure, homodimer. Mg(2+) is required as a cofactor. Mn(2+) serves as cofactor.

The protein resides in the cytoplasm. The enzyme catalyses acetate + ATP = acetyl phosphate + ADP. The protein operates within metabolic intermediate biosynthesis; acetyl-CoA biosynthesis; acetyl-CoA from acetate: step 1/2. Functionally, catalyzes the formation of acetyl phosphate from acetate and ATP. Can also catalyze the reverse reaction. This is Acetate kinase from Rickettsia typhi (strain ATCC VR-144 / Wilmington).